A 166-amino-acid polypeptide reads, in one-letter code: Phosphopantetheine adenylyltransferase (166 aa).

S11 is a substrate binding site. ATP-binding positions include 11–12 (SF) and H19. Residues K43, A76, and R90 each coordinate substrate. ATP is bound by residues 91 to 93 (GLR), E101, and 126 to 132 (LQPVSSS).

The protein belongs to the bacterial CoaD family. In terms of assembly, homohexamer. Mg(2+) is required as a cofactor.

It is found in the cytoplasm. It catalyses the reaction (R)-4'-phosphopantetheine + ATP + H(+) = 3'-dephospho-CoA + diphosphate. It participates in cofactor biosynthesis; coenzyme A biosynthesis; CoA from (R)-pantothenate: step 4/5. Its function is as follows. Reversibly transfers an adenylyl group from ATP to 4'-phosphopantetheine, yielding dephospho-CoA (dPCoA) and pyrophosphate. The sequence is that of Phosphopantetheine adenylyltransferase from Streptococcus equi subsp. equi (strain 4047).